We begin with the raw amino-acid sequence, 452 residues long: Gastrin/cholecystokinin type B receptor (452 aa).

Topologically, residues 1-55 (MELVKLNRSVQGSGPVASLCRPGGPLLNNSGTGNLSCEPPRIRGAGTRELELAIR) are extracellular. N-linked (GlcNAc...) asparagine glycans are attached at residues Asn-7, Asn-28, and Asn-34. The chain crosses the membrane as a helical span at residues 56-77 (VTLYAVIFLMSVGGNILIIVVL). The Cytoplasmic portion of the chain corresponds to 78 to 85 (GLSRRLRT). Residues 86-107 (VTNAFLLSLAVSDLLLAVACMP) traverse the membrane as a helical segment. Topologically, residues 108 to 129 (FTLLPNLMGTFIFGTVICKAVS) are extracellular. Cys-125 and Cys-203 are disulfide-bonded. The chain crosses the membrane as a helical span at residues 130-148 (YLMGVSVSVSTLSLVAIAL). The Cytoplasmic portion of the chain corresponds to 149 to 168 (ERYSAICRPLQARVWQTRSH). The helical transmembrane segment at 169 to 187 (AARVILATWLLSGLLMVPY) threads the bilayer. Topologically, residues 188 to 217 (PVYTAVQPVGPRVLQCVHRWPSARVRQTWS) are extracellular. The helical transmembrane segment at 218 to 240 (VLLLLLLFFVPGVVMAVAYGLIS) threads the bilayer. The Cytoplasmic segment spans residues 241–338 (RELYLGLRFD…KLLAKKRVVR (98 aa)). Residues 255-285 (SESQSRVRGQGGLPGGAAPGPVHQNGRCRPE) are disordered. The span at 263–272 (GQGGLPGGAA) shows a compositional bias: gly residues. The chain crosses the membrane as a helical span at residues 339–360 (MLLVIVVLFFMCWLPVYSANTW). The Extracellular segment spans residues 361-378 (RAFDGPGAHRALSGAPIS). The helical transmembrane segment at 379–399 (FIHLLSYASACVNPLVYCFMH) threads the bilayer. Over 400–452 (RRFRQACLDTCARCCPRPPRARPRPLPDEDPPTPSIASLSRLSYTTISTLGPG) the chain is Cytoplasmic. A lipid anchor (S-palmitoyl cysteine) is attached at Cys-413.

This sequence belongs to the G-protein coupled receptor 1 family.

It is found in the cell membrane. Receptor for gastrin and cholecystokinin. The CCK-B receptors occur throughout the central nervous system where they modulate anxiety, analgesia, arousal, and neuroleptic activity. This receptor mediates its action by association with G proteins that activate a phosphatidylinositol-calcium second messenger system. This chain is Gastrin/cholecystokinin type B receptor (CCKBR), found in Oryctolagus cuniculus (Rabbit).